The following is a 239-amino-acid chain: Ribonuclease PH (239 aa).

Residues R87 and 125-127 contribute to the phosphate site; that span reads GTR.

It belongs to the RNase PH family. In terms of assembly, homohexameric ring arranged as a trimer of dimers.

The catalysed reaction is tRNA(n+1) + phosphate = tRNA(n) + a ribonucleoside 5'-diphosphate. Its function is as follows. Phosphorolytic 3'-5' exoribonuclease that plays an important role in tRNA 3'-end maturation. Removes nucleotide residues following the 3'-CCA terminus of tRNAs; can also add nucleotides to the ends of RNA molecules by using nucleoside diphosphates as substrates, but this may not be physiologically important. Probably plays a role in initiation of 16S rRNA degradation (leading to ribosome degradation) during starvation. The chain is Ribonuclease PH from Pseudomonas paraeruginosa (strain DSM 24068 / PA7) (Pseudomonas aeruginosa (strain PA7)).